Reading from the N-terminus, the 358-residue chain is Putative KilA-N domain-containing protein 313L (358 aa).

The KilA-N domain occupies 15–124 (NFYYGLFGDF…DKCNQIVIDF (110 aa)). A coiled-coil region spans residues 126–245 (VVEFKEKEKE…VKLEISVEDR (120 aa)).

It belongs to the IIV-6 006L/238R/313L/468L family.

This is Putative KilA-N domain-containing protein 313L from Acheta domesticus (House cricket).